The chain runs to 240 residues: Ribonuclease PH (240 aa).

Phosphate is bound by residues R86 and 124-126 (GTR).

The protein belongs to the RNase PH family. As to quaternary structure, homohexameric ring arranged as a trimer of dimers.

The enzyme catalyses tRNA(n+1) + phosphate = tRNA(n) + a ribonucleoside 5'-diphosphate. Functionally, phosphorolytic 3'-5' exoribonuclease that plays an important role in tRNA 3'-end maturation. Removes nucleotide residues following the 3'-CCA terminus of tRNAs; can also add nucleotides to the ends of RNA molecules by using nucleoside diphosphates as substrates, but this may not be physiologically important. Probably plays a role in initiation of 16S rRNA degradation (leading to ribosome degradation) during starvation. The sequence is that of Ribonuclease PH from Rhodospirillum rubrum (strain ATCC 11170 / ATH 1.1.1 / DSM 467 / LMG 4362 / NCIMB 8255 / S1).